We begin with the raw amino-acid sequence, 304 residues long: Tyrosine recombinase XerC (304 aa).

The region spanning 2 to 88 (ENVKNFVKLF…ALRSFYKFLM (87 aa)) is the Core-binding (CB) domain. Residues 109–294 (RIPKFLYQKE…SKEMLRNTYM (186 aa)) enclose the Tyr recombinase domain. Active-site residues include Arg149, Lys173, His246, Arg249, and His272. Residue Tyr281 is the O-(3'-phospho-DNA)-tyrosine intermediate of the active site.

It belongs to the 'phage' integrase family. XerC subfamily. Forms a cyclic heterotetrameric complex composed of two molecules of XerC and two molecules of XerD.

It is found in the cytoplasm. Site-specific tyrosine recombinase, which acts by catalyzing the cutting and rejoining of the recombining DNA molecules. The XerC-XerD complex is essential to convert dimers of the bacterial chromosome into monomers to permit their segregation at cell division. It also contributes to the segregational stability of plasmids. In Bacillus subtilis (strain 168), this protein is Tyrosine recombinase XerC.